The chain runs to 599 residues: Flap endonuclease GEN-like 1 (599 aa).

The segment at 1 to 96 (MGVGGNFWDL…ISRFFRSSGI (96 aa)) is N-domain. Positions 2–95 (GVGGNFWDLL…RISRFFRSSG (94 aa)) are XPG-N domain. Asp31, Asp75, Glu140, Glu142, Asp161, Asp163, and Asp213 together coordinate Mg(2+). Residues 128-213 (ELLGIPVLKA…IAISLLVGND (86 aa)) are XPG-I domain. Residues 128 to 217 (ELLGIPVLKA…LLVGNDYDSG (90 aa)) are I-domain. A 5'-3' exonuclease domain region spans residues 213 to 407 (DYDSGGVLGI…LLPMLSTIYL (195 aa)). 2 disordered regions span residues 522-545 (RESK…MGVQ) and 559-599 (AAGQ…LLFG). Composition is skewed to polar residues over residues 563 to 572 (SIETGGSSKA) and 580 to 590 (ATSTSSSNLTK).

This sequence belongs to the XPG/RAD2 endonuclease family. GEN subfamily. Mg(2+) is required as a cofactor.

The protein localises to the nucleus. Endonuclease which cleaves flap structures at the junction between single-stranded DNA and double-stranded DNA with a specific cleavage site in the 5' overhang strand exactly one nucleotide 3' of the branch point. Structure- and sequence-specific nuclease that resolves holliday junctions (HJs) by symmetrically oriented incisions in two opposing strands near the junction point, thus leading to ligatable products; HJs are physical links between homologous DNA molecules that arise as central intermediary structures during homologous recombination and repair in meiotic and somatic cells. Structure-specific nuclease with 5'-flap endonuclease activity, preferentially cleaving static flaps 5' overhang strand exactly one nucleotide in the 3' direction of the branch point. Also able to cleave double-stranded flap strand 1 exactly at the branch point. The protein is Flap endonuclease GEN-like 1 of Arabidopsis thaliana (Mouse-ear cress).